An 85-amino-acid chain; its full sequence is Translation initiation factor IF-1 (85 aa).

The region spanning 1 to 72 (MAKEELIEMH…SKGRITFRHI (72 aa)) is the S1-like domain.

This sequence belongs to the IF-1 family. In terms of assembly, component of the 30S ribosomal translation pre-initiation complex which assembles on the 30S ribosome in the order IF-2 and IF-3, IF-1 and N-formylmethionyl-tRNA(fMet); mRNA recruitment can occur at any time during PIC assembly.

It is found in the cytoplasm. Its function is as follows. One of the essential components for the initiation of protein synthesis. Stabilizes the binding of IF-2 and IF-3 on the 30S subunit to which N-formylmethionyl-tRNA(fMet) subsequently binds. Helps modulate mRNA selection, yielding the 30S pre-initiation complex (PIC). Upon addition of the 50S ribosomal subunit IF-1, IF-2 and IF-3 are released leaving the mature 70S translation initiation complex. The sequence is that of Translation initiation factor IF-1 from Polaromonas naphthalenivorans (strain CJ2).